We begin with the raw amino-acid sequence, 357 residues long: MRRTLKAAILGATGLVGIEYVRMLADHPYIKPTYLAGKGSVGKPYGEIVRWQTVGNVPKEVANQEVKPTDPKLMDDVDIIFSPLPQGAAGPVEEQFAKLGFNVISNSPDHRFDMDVPMIIPEVNPHTVTLIDEQRKRRDWKGFIVTTPLCTAQGAAIPLTPIYQNFKMSGVMITTMQSLSGAGYPGIASLDIVDNALPLGDGYDAKTVKEITRILSEVKRNVQEPGVNEITLDATTHRIATIHGHYEVAYVTFKEDTDVRKVMESMESFKGEPQDLKLPTAPEKPIIVTTQDARPQVFFDRWAGNPPGMSVVVGRLKQVNPRTIRFVSLIHNTVRGAAGGGVLTAELLVEKGYIDKR.

13 to 16 provides a ligand contact to NADP(+); the sequence is TGLV. Cys-150 serves as the catalytic Acyl-thioester intermediate. 180-181 is an NADP(+) binding site; it reads SG. The active-site Proton acceptor is His-245. 332–333 lines the NADP(+) pocket; sequence NT.

This sequence belongs to the aspartate-semialdehyde dehydrogenase family. As to quaternary structure, homotetramer.

The catalysed reaction is 3-oxopropanoate + NADP(+) + CoA = malonyl-CoA + NADPH + H(+). Functionally, catalyzes the reduction of malonyl-CoA to malonate semialdehyde, a key step in the 3-hydroxypropanoate and the 3-hydroxypropanoate/4-hydroxybutyrate cycles. This chain is Malonyl CoA reductase (NADP), found in Metallosphaera sedula (strain ATCC 51363 / DSM 5348 / JCM 9185 / NBRC 15509 / TH2).